The primary structure comprises 406 residues: Putative permease Rv2963 (406 aa).

Helical transmembrane passes span W30–V50, L67–L87, L111–E131, F132–A152, L208–V228, A246–G266, G278–L298, V312–F332, and V361–P381.

This sequence belongs to the UPF0718 family.

It localises to the cell membrane. The protein is Putative permease Rv2963 of Mycobacterium tuberculosis (strain ATCC 25618 / H37Rv).